Here is an 87-residue protein sequence, read N- to C-terminus: Sec-independent protein translocase protein TatA (87 aa).

Residues 3–23 (GTFSWTHLLIIALLFVVLFGA) form a helical membrane-spanning segment. A disordered region spans residues 47 to 87 (MQHETPQANAAPVQQPAQQLPPAQPAQAPAQPVNQAEQKSA). A compositionally biased stretch (low complexity) spans 52 to 87 (PQANAAPVQQPAQQLPPAQPAQAPAQPVNQAEQKSA).

This sequence belongs to the TatA/E family. The Tat system comprises two distinct complexes: a TatABC complex, containing multiple copies of TatA, TatB and TatC subunits, and a separate TatA complex, containing only TatA subunits. Substrates initially bind to the TatABC complex, which probably triggers association of the separate TatA complex to form the active translocon.

It localises to the cell membrane. In terms of biological role, part of the twin-arginine translocation (Tat) system that transports large folded proteins containing a characteristic twin-arginine motif in their signal peptide across membranes. TatA could form the protein-conducting channel of the Tat system. The protein is Sec-independent protein translocase protein TatA of Nocardia farcinica (strain IFM 10152).